A 472-amino-acid chain; its full sequence is MGDVAPEVEISQYTKDKASCTRISIESYYSKRVTQCAERENRLKKLEEDMSARGLSDDEKDEKRKIHHSKETDYLRLKRTRLTVNDFESLKVIGRGAFGEVRLVQKHDTGHIYAMKILRKSEMVEKEQTAHVRAERDILSEADCDWVVKMYYSFQDYSNLYLVMEFLPGGDMMTLLIKKDTLTEEATQFYVAEAALAIQFIHNLGFIHRDIKPDNLLLDARGHVKLSDFGLCTGLKKFHRTDHYRNWPVTLPPDFISKPFESKRKAETWKRNRRAYAYSTVGTPDYIAPEVFQPNGYTKSCDWWSLGVIMYEMLIGYPPFCSELPQETYRKVINWQQTLVFPSDVPISIEAKATIKRFCCEAERRLGNHGGLDEIKQCPFFRRIDWNHIRERPPPIRVTVKSIDDTSNFDDFPDEDLSWPTSTLIRPEEQPGRRGEFVDFTYKRFDGLTQKMRYSDLKKQAKKNKKGQGSSD.

Positions F87–F381 constitute a Protein kinase domain. Residues I93 to V101 and K116 each bind ATP. Catalysis depends on D210, which acts as the Proton acceptor. One can recognise an AGC-kinase C-terminal domain in the interval R382 to M452.

Belongs to the protein kinase superfamily. AGC Ser/Thr protein kinase family. It depends on Mg(2+) as a cofactor.

Its subcellular location is the cytoplasm. The protein resides in the nucleus. It catalyses the reaction L-seryl-[protein] + ATP = O-phospho-L-seryl-[protein] + ADP + H(+). The catalysed reaction is L-threonyl-[protein] + ATP = O-phospho-L-threonyl-[protein] + ADP + H(+). Acts with sax-2 to restrict the growth of both primary and secondary neurites. Regulates mechanosensory tiling by controlling the termination point of sensory dendrites. The polypeptide is Serine/threonine-protein kinase sax-1 (Caenorhabditis briggsae).